Here is a 151-residue protein sequence, read N- to C-terminus: Differentiation-associated protein 2 (151 aa).

The N-terminal stretch at 1 to 22 is a signal peptide; it reads MKQIIRLITTLLLLSLIGITCA.

It is found in the endoplasmic reticulum. The protein resides in the vacuole. Functionally, has an essential role in the initiation of differentiation. Also required for cAMP signaling. The protein is Differentiation-associated protein 2 (dia2) of Dictyostelium discoideum (Social amoeba).